The following is a 346-amino-acid chain: Phosphoribosylformylglycinamidine cyclo-ligase (346 aa).

The protein belongs to the AIR synthase family.

It is found in the cytoplasm. The enzyme catalyses 2-formamido-N(1)-(5-O-phospho-beta-D-ribosyl)acetamidine + ATP = 5-amino-1-(5-phospho-beta-D-ribosyl)imidazole + ADP + phosphate + H(+). It functions in the pathway purine metabolism; IMP biosynthesis via de novo pathway; 5-amino-1-(5-phospho-D-ribosyl)imidazole from N(2)-formyl-N(1)-(5-phospho-D-ribosyl)glycinamide: step 2/2. This chain is Phosphoribosylformylglycinamidine cyclo-ligase, found in Aliivibrio fischeri (strain ATCC 700601 / ES114) (Vibrio fischeri).